The chain runs to 317 residues: MKVALLGAAGGIGQTLALLLKLRLPVGTDLALYDISPVTPGIAVDISHIPTSVSAVGYSGEDPSEALKGANLVIITAGVARKPGMTRADLFNINADIVKNLVEKVAEVCPKACIGIVTNPVNTLVPIAAEVLRKAGVYDKRKLFGVTTLDVVRAKTFTSELKEKHVETVKVPVIGGHSGPTILPLLSQALSEGLPLSFTQEEIEALTYRIQNAGTEVVEAKAGGGSATLSMAESGARFAVAVFKALLGEDCVRYAYVESKEGSGYPEFFAHPVRFGLTGVEELLPIGKLSEYEQAKLGELKPVLEADIALGKNFVNP.

NAD(+)-binding positions include 7 to 13 (GAAGGIG) and aspartate 34. Positions 81 and 87 each coordinate substrate. Residues asparagine 94 and 117 to 119 (VTN) contribute to the NAD(+) site. 2 residues coordinate substrate: asparagine 119 and arginine 153. Catalysis depends on histidine 177, which acts as the Proton acceptor. Methionine 231 contacts NAD(+).

It belongs to the LDH/MDH superfamily. MDH type 1 family. As to quaternary structure, homodimer.

The catalysed reaction is (S)-malate + NAD(+) = oxaloacetate + NADH + H(+). Its function is as follows. Catalyzes the reversible oxidation of malate to oxaloacetate. This is Malate dehydrogenase from Actinobacillus pleuropneumoniae serotype 5b (strain L20).